A 443-amino-acid chain; its full sequence is Ribosomal protein uS12 methylthiotransferase RimO (443 aa).

The MTTase N-terminal domain occupies 8–118 (PKIGFVSLGC…VLSHIHHYVP (111 aa)). Cys-17, Cys-53, Cys-82, Cys-150, Cys-154, and Cys-157 together coordinate [4Fe-4S] cluster. Residues 136 to 373 (LTPRHYAYLK…MQLQQQISTE (238 aa)) form the Radical SAM core domain. A TRAM domain is found at 376 to 442 (QEKIGKVLPV…EYDLWGTIVE (67 aa)).

Belongs to the methylthiotransferase family. RimO subfamily. [4Fe-4S] cluster is required as a cofactor.

It is found in the cytoplasm. The catalysed reaction is L-aspartate(89)-[ribosomal protein uS12]-hydrogen + (sulfur carrier)-SH + AH2 + 2 S-adenosyl-L-methionine = 3-methylsulfanyl-L-aspartate(89)-[ribosomal protein uS12]-hydrogen + (sulfur carrier)-H + 5'-deoxyadenosine + L-methionine + A + S-adenosyl-L-homocysteine + 2 H(+). Functionally, catalyzes the methylthiolation of an aspartic acid residue of ribosomal protein uS12. In Proteus mirabilis (strain HI4320), this protein is Ribosomal protein uS12 methylthiotransferase RimO.